The primary structure comprises 460 residues: Kynureninase (460 aa).

Residues Leu116, Thr117, 144–147 (FPSD), Ser199, Asp228, His231, and Tyr253 each bind pyridoxal 5'-phosphate. Lys254 is modified (N6-(pyridoxal phosphate)lysine). Pyridoxal 5'-phosphate-binding residues include Trp288 and Asn316.

Belongs to the kynureninase family. Homodimer. Requires pyridoxal 5'-phosphate as cofactor.

The protein resides in the cytoplasm. The catalysed reaction is L-kynurenine + H2O = anthranilate + L-alanine + H(+). The enzyme catalyses 3-hydroxy-L-kynurenine + H2O = 3-hydroxyanthranilate + L-alanine + H(+). Its pathway is amino-acid degradation; L-kynurenine degradation; L-alanine and anthranilate from L-kynurenine: step 1/1. The protein operates within cofactor biosynthesis; NAD(+) biosynthesis; quinolinate from L-kynurenine: step 2/3. Its function is as follows. Catalyzes the cleavage of L-kynurenine (L-Kyn) and L-3-hydroxykynurenine (L-3OHKyn) into anthranilic acid (AA) and 3-hydroxyanthranilic acid (3-OHAA), respectively. The polypeptide is Kynureninase (Debaryomyces hansenii (strain ATCC 36239 / CBS 767 / BCRC 21394 / JCM 1990 / NBRC 0083 / IGC 2968) (Yeast)).